The following is an 845-amino-acid chain: Ribonucleoside-diphosphate reductase subunit alpha (845 aa).

One can recognise an ATP-cone domain in the interval 1–98; the sequence is MHIIKRNGEP…LYRDDRTKKR (98 aa). Substrate-binding positions include Thr303, 318–319, Gly347, 534–538, and 725–729; these read SC, NLCTE, and PTSST. Cys319 and Cys574 form a disulfide bridge. Asn534 (proton acceptor) is an active-site residue. Residue Cys536 is the Cysteine radical intermediate of the active site. The active-site Proton acceptor is the Glu538.

This sequence belongs to the ribonucleoside diphosphate reductase large chain family. In terms of assembly, tetramer of two alpha and two beta subunits.

It catalyses the reaction a 2'-deoxyribonucleoside 5'-diphosphate + [thioredoxin]-disulfide + H2O = a ribonucleoside 5'-diphosphate + [thioredoxin]-dithiol. Its activity is regulated as follows. Under complex allosteric control mediated by deoxynucleoside triphosphates and ATP binding. The type of nucleotide bound at the specificity site determines substrate preference. It seems probable that ATP makes the enzyme reduce CDP and UDP, dGTP favors ADP reduction and dTTP favors GDP reduction. Provides the precursors necessary for DNA synthesis. Catalyzes the biosynthesis of deoxyribonucleotides from the corresponding ribonucleotides. This Treponema pallidum (strain Nichols) protein is Ribonucleoside-diphosphate reductase subunit alpha (nrdA).